Here is a 151-residue protein sequence, read N- to C-terminus: Ribosomal RNA large subunit methyltransferase H (151 aa).

Residues Gly100 and 119–124 each bind S-adenosyl-L-methionine; that span reads LSRMTF.

This sequence belongs to the RNA methyltransferase RlmH family. Homodimer.

The protein resides in the cytoplasm. The enzyme catalyses pseudouridine(1915) in 23S rRNA + S-adenosyl-L-methionine = N(3)-methylpseudouridine(1915) in 23S rRNA + S-adenosyl-L-homocysteine + H(+). Its function is as follows. Specifically methylates the pseudouridine at position 1915 (m3Psi1915) in 23S rRNA. This Thermotoga neapolitana (strain ATCC 49049 / DSM 4359 / NBRC 107923 / NS-E) protein is Ribosomal RNA large subunit methyltransferase H.